Consider the following 160-residue polypeptide: Ribosomal RNA large subunit methyltransferase H (160 aa).

The S-adenosyl-L-methionine site is built by Leu-76 and Gly-108.

It belongs to the RNA methyltransferase RlmH family. Homodimer.

Its subcellular location is the cytoplasm. It carries out the reaction pseudouridine(1915) in 23S rRNA + S-adenosyl-L-methionine = N(3)-methylpseudouridine(1915) in 23S rRNA + S-adenosyl-L-homocysteine + H(+). In terms of biological role, specifically methylates the pseudouridine at position 1915 (m3Psi1915) in 23S rRNA. The polypeptide is Ribosomal RNA large subunit methyltransferase H (Nitrobacter winogradskyi (strain ATCC 25391 / DSM 10237 / CIP 104748 / NCIMB 11846 / Nb-255)).